The sequence spans 444 residues: ATP-dependent protease ATPase subunit HslU (444 aa).

ATP-binding positions include isoleucine 18 and glycine 60–glutamate 65. Positions aspartate 141–lysine 161 are disordered. 3 residues coordinate ATP: aspartate 257, glutamate 322, and arginine 394.

It belongs to the ClpX chaperone family. HslU subfamily. As to quaternary structure, a double ring-shaped homohexamer of HslV is capped on each side by a ring-shaped HslU homohexamer. The assembly of the HslU/HslV complex is dependent on binding of ATP.

It is found in the cytoplasm. In terms of biological role, ATPase subunit of a proteasome-like degradation complex; this subunit has chaperone activity. The binding of ATP and its subsequent hydrolysis by HslU are essential for unfolding of protein substrates subsequently hydrolyzed by HslV. HslU recognizes the N-terminal part of its protein substrates and unfolds these before they are guided to HslV for hydrolysis. The sequence is that of ATP-dependent protease ATPase subunit HslU from Aliivibrio fischeri (strain MJ11) (Vibrio fischeri).